The chain runs to 504 residues: Maturase K (504 aa).

Belongs to the intron maturase 2 family. MatK subfamily.

Its subcellular location is the plastid. The protein localises to the chloroplast. Usually encoded in the trnK tRNA gene intron. Probably assists in splicing its own and other chloroplast group II introns. The polypeptide is Maturase K (Cynophalla hastata (Broadleaf caper)).